The chain runs to 385 residues: Prophage integrase IntS (385 aa).

Residues 91-172 (NSFSAIYKEW…RCGEVFRYAI (82 aa)) form the Core-binding (CB) domain. A Tyr recombinase domain is found at 195-373 (KNFPFLPADQ…QYLDKRREMM (179 aa)). Catalysis depends on residues R234, K261, H324, R327, and H350. Y360 serves as the catalytic O-(3'-phospho-DNA)-tyrosine intermediate.

Belongs to the 'phage' integrase family.

Functionally, integrase is necessary for integration of the phage into the host genome by site-specific recombination. In conjunction with excisionase, integrase is also necessary for excision of the prophage from the host genome. This is Prophage integrase IntS (intS) from Escherichia coli (strain K12).